The following is a 312-amino-acid chain: HPr kinase/phosphorylase (312 aa).

Residues histidine 139 and lysine 160 contribute to the active site. 154–161 (GDSGIGKS) serves as a coordination point for ATP. Serine 161 is a binding site for Mg(2+). Aspartate 178 functions as the Proton acceptor; for phosphorylation activity. Proton donor; for dephosphorylation activity in the catalytic mechanism. The interval 202-211 (IEIRGVGIID) is important for the catalytic mechanism of both phosphorylation and dephosphorylation. Glutamate 203 contacts Mg(2+). The active site involves arginine 244. Positions 265–270 (PVKTGR) are important for the catalytic mechanism of dephosphorylation.

This sequence belongs to the HPrK/P family. In terms of assembly, homohexamer. Requires Mg(2+) as cofactor.

It carries out the reaction [HPr protein]-L-serine + ATP = [HPr protein]-O-phospho-L-serine + ADP + H(+). The catalysed reaction is [HPr protein]-O-phospho-L-serine + phosphate + H(+) = [HPr protein]-L-serine + diphosphate. Functionally, catalyzes the ATP- as well as the pyrophosphate-dependent phosphorylation of a specific serine residue in HPr, a phosphocarrier protein of the phosphoenolpyruvate-dependent sugar phosphotransferase system (PTS). HprK/P also catalyzes the pyrophosphate-producing, inorganic phosphate-dependent dephosphorylation (phosphorolysis) of seryl-phosphorylated HPr (P-Ser-HPr). The two antagonistic activities of HprK/P are regulated by several intracellular metabolites, which change their concentration in response to the absence or presence of rapidly metabolisable carbon sources (glucose, fructose, etc.) in the growth medium. Therefore, by controlling the phosphorylation state of HPr, HPrK/P is a sensor enzyme that plays a major role in the regulation of carbon metabolism and sugar transport: it mediates carbon catabolite repression (CCR), and regulates PTS-catalyzed carbohydrate uptake and inducer exclusion. This is HPr kinase/phosphorylase from Streptococcus pneumoniae serotype 4 (strain ATCC BAA-334 / TIGR4).